Consider the following 331-residue polypeptide: DNA-directed RNA polymerase subunit alpha (331 aa).

The segment at 1–226 (MLIAQRPTLT…ELFGLCRELN (226 aa)) is alpha N-terminal domain (alpha-NTD). Residues 243–331 (TNPEMAVPIE…GGTFFSPEDE (89 aa)) form an alpha C-terminal domain (alpha-CTD) region.

Belongs to the RNA polymerase alpha chain family. As to quaternary structure, homodimer. The RNAP catalytic core consists of 2 alpha, 1 beta, 1 beta' and 1 omega subunit. When a sigma factor is associated with the core the holoenzyme is formed, which can initiate transcription.

It carries out the reaction RNA(n) + a ribonucleoside 5'-triphosphate = RNA(n+1) + diphosphate. Its function is as follows. DNA-dependent RNA polymerase catalyzes the transcription of DNA into RNA using the four ribonucleoside triphosphates as substrates. This is DNA-directed RNA polymerase subunit alpha from Bifidobacterium longum (strain NCC 2705).